The following is a 1439-amino-acid chain: ABC transporter G family member 14 (1439 aa).

A compositionally biased stretch (basic and acidic residues) spans 1–17; sequence MEENSNKFEQELKEIGQ. Positions 1–21 are disordered; the sequence is MEENSNKFEQELKEIGQDRNQ. Residues 117–370 form the ABC transporter 1 domain; the sequence is FSILNFFKPS…FMSLGFDCEP (254 aa). One can recognise an ABC transmembrane type-2 1 domain in the interval 475–700; that stretch reads LNDKFGLFTK…GSEFDAYRIC (226 aa). A run of 6 helical transmembrane segments spans residues 479 to 499, 516 to 536, 564 to 584, 589 to 609, 614 to 634, and 734 to 754; these read FGLF…SSVF, ILSA…MTFI, IPFT…MFGL, GKFF…TALF, YLCP…IFML, and IIVY…MEYI. In terms of domain architecture, ABC transporter 2 spans 805 to 1049; the sequence is FTWQNIRYTV…LTSYFERHGV (245 aa). An ATP-binding site is contributed by 841-848; sequence GSSGAGKT. Positions 1141–1366 constitute an ABC transmembrane type-2 2 domain; the sequence is YYTYGSFVQS…YNTCQNYTSA (226 aa). Helical transmembrane passes span 1144–1164, 1175–1195, 1217–1237, 1256–1276, 1283–1303, and 1413–1433; these read YGSF…FWNL, IFFI…VMPQ, FAIS…TIFF, FYFW…GQAV, MFFA…FSGV, and VGII…FVYL.

Belongs to the ABC transporter superfamily. ABCG family. PDR (TC 3.A.1.205) subfamily.

Its subcellular location is the membrane. This is ABC transporter G family member 14 (abcG14) from Dictyostelium discoideum (Social amoeba).